A 305-amino-acid chain; its full sequence is Olfactory receptor 5M11 (305 aa).

The Extracellular portion of the chain corresponds to 1–25; sequence MSNTNGSAITEFILLGLTDCPELQS. N-linked (GlcNAc...) asparagine glycosylation occurs at asparagine 5. The chain crosses the membrane as a helical span at residues 26-46; it reads LLFVLFLVVYLVTLLGNLGMI. Residues 47–54 lie on the Cytoplasmic side of the membrane; sequence MLMRLDSR. Residues 55-75 form a helical membrane-spanning segment; that stretch reads LHTPMYFFLTNLAFVDLCYTS. Topologically, residues 76 to 98 are extracellular; sequence NATPQMSTNIVSEKTISFAGCFT. A disulfide bond links cysteine 96 and cysteine 188. The helical transmembrane segment at 99-119 threads the bilayer; the sequence is QCYIFIALLLTEFYMLAAMAY. The Cytoplasmic segment spans residues 120–138; it reads DRYVAIYDPLRYSVKTSRR. Residues 139–159 form a helical membrane-spanning segment; it reads VCICLATFPYVYGFSDGLFQA. Residues 160–195 lie on the Extracellular side of the membrane; sequence ILTFRLTFCRSSVINHFYCADPPLIKLSCSDTYVKE. Residues 196–216 form a helical membrane-spanning segment; that stretch reads HAMFISAGFNLSSSLTIVLVS. Residues 217 to 236 lie on the Cytoplasmic side of the membrane; that stretch reads YAFILAAILRIKSAEGRHKA. Residues 237 to 257 traverse the membrane as a helical segment; the sequence is FSTCGSHMMAVTLFYGTLFCM. At 258–270 the chain is on the extracellular side; sequence YIRPPTDKTVEES. Residues 271–291 form a helical membrane-spanning segment; it reads KIIAVFYTFVSPVLNPLIYSL. The Cytoplasmic segment spans residues 292–305; sequence RNKDVKQALKNVLR.

The protein belongs to the G-protein coupled receptor 1 family.

It is found in the cell membrane. Odorant receptor. The chain is Olfactory receptor 5M11 (OR5M11) from Homo sapiens (Human).